The chain runs to 1455 residues: Fanconi anemia group A protein (1455 aa).

The Nuclear localization signal signature appears at 18-34 (RRRAWAELLAGRVKREK). Ser1449 carries the phosphoserine modification.

Belongs to the multisubunit FA complex composed of FANCA, FANCB, FANCC, FANCE, FANCF, FANCG, FANCL/PHF9 and FANCM. The complex is not found in FA patients. In complex with FANCF, FANCG and FANCL, but not with FANCC, nor FANCE, interacts with HES1; this interaction may be essential for the stability and nuclear localization of FA core complex proteins. The complex with FANCC and FANCG may also include EIF2AK2 and HSP70. Interacts with FAAP20/C1orf86; interaction is direct. In terms of processing, phosphorylation is required for the formation of the nuclear complex. Not phosphorylated in cells derived from groups A, B, C, E, F, G, and H.

The protein localises to the nucleus. The protein resides in the cytoplasm. DNA repair protein that may operate in a postreplication repair or a cell cycle checkpoint function. May be involved in interstrand DNA cross-link repair and in the maintenance of normal chromosome stability. This Homo sapiens (Human) protein is Fanconi anemia group A protein (FANCA).